A 310-amino-acid polypeptide reads, in one-letter code: Flavin-dependent trigonelline monooxygenase, reductase component (310 aa).

FMN-binding positions include 40–43 (TANS), 57–63 (SIAKTSS), 90–91 (FA), and arginine 97.

Belongs to the non-flavoprotein flavin reductase family. In terms of assembly, homodimer. The trigonelline monooxygenase is composed of a reductase component TgnA and an oxygenase component TgnB.

The enzyme catalyses a reduced flavin + NAD(+) = an oxidized flavin + NADH + 2 H(+). It carries out the reaction FADH2 + NAD(+) = FAD + NADH + 2 H(+). It catalyses the reaction FMNH2 + NAD(+) = FMN + NADH + 2 H(+). Maximal reductase activity is achieved only upon trigonelline (TG) binding to the reductase component before interaction with NADH. It seems that TgnA undergoes an allosteric transition upon trigonelline (TG) binding accounting for the positive cooperativity toward NADH oxidation. Involved in the degradation of the pyridine ring of trigonelline (TG; N-methylnicotinate) into succinate and methylamine as carbon and nitrogen sources, respectively. TgnA catalyzes the reduction of flavin (FMN or FAD) by NADH and supplies the reduced flavin to the oxygenase component TgnB. This Acinetobacter baylyi (strain ATCC 33305 / BD413 / ADP1) protein is Flavin-dependent trigonelline monooxygenase, reductase component.